The following is a 469-amino-acid chain: Repressible acid phosphatase (469 aa).

A signal peptide spans 1–16; that stretch reads MLSILLSLLSLSGTHA. 2 N-linked (GlcNAc...) asparagine glycosylation sites follow: Asn23 and Asn31. The active-site Nucleophile is His77. N-linked (GlcNAc...) asparagine glycosylation is found at Asn129, Asn201, Asn229, Asn250, and Asn317. Asp340 functions as the Proton donor in the catalytic mechanism. N-linked (GlcNAc...) asparagine glycosylation is found at Asn392 and Asn447.

The protein belongs to the histidine acid phosphatase family. Post-translationally, glycosylated during secretion across the membrane.

The protein resides in the secreted. It catalyses the reaction a phosphate monoester + H2O = an alcohol + phosphate. This chain is Repressible acid phosphatase (PHO5), found in Kluyveromyces lactis (strain ATCC 8585 / CBS 2359 / DSM 70799 / NBRC 1267 / NRRL Y-1140 / WM37) (Yeast).